The primary structure comprises 148 residues: Large ribosomal subunit protein bL9 (148 aa).

Belongs to the bacterial ribosomal protein bL9 family.

In terms of biological role, binds to the 23S rRNA. The sequence is that of Large ribosomal subunit protein bL9 from Dechloromonas aromatica (strain RCB).